Consider the following 210-residue polypeptide: Proteasome subunit beta 2 (210 aa).

The propeptide at 1-12 (MSNNVEEKILHG) is removed in mature form; by autocatalysis. Residue Thr-13 is the Nucleophile of the active site.

The protein belongs to the peptidase T1B family. In terms of assembly, the 20S proteasome core is composed of 14 alpha and 14 beta subunits that assemble into four stacked heptameric rings, resulting in a barrel-shaped structure. The two inner rings, each composed of seven catalytic beta subunits, are sandwiched by two outer rings, each composed of seven alpha subunits. The catalytic chamber with the active sites is on the inside of the barrel. Has a gated structure, the ends of the cylinder being occluded by the N-termini of the alpha-subunits. Is capped at one or both ends by the proteasome regulatory ATPase, PAN.

The protein resides in the cytoplasm. The enzyme catalyses Cleavage of peptide bonds with very broad specificity.. With respect to regulation, the formation of the proteasomal ATPase PAN-20S proteasome complex, via the docking of the C-termini of PAN into the intersubunit pockets in the alpha-rings, triggers opening of the gate for substrate entry. Interconversion between the open-gate and close-gate conformations leads to a dynamic regulation of the 20S proteasome proteolysis activity. In terms of biological role, component of the proteasome core, a large protease complex with broad specificity involved in protein degradation. This Nitrosopumilus maritimus (strain SCM1) protein is Proteasome subunit beta 2.